Reading from the N-terminus, the 431-residue chain is Keratin, type I cytoskeletal 40 (431 aa).

A head region spans residues 1-89 (MASDCSPTGC…CEDGVFNSNE (89 aa)). One can recognise an IF rod domain in the interval 89-400 (EKETMQFLND…GLLDSEDSRL (312 aa)). Residues 90-124 (KETMQFLNDRLASYLEKVRGLEELNAELECRIREQ) are coil 1A. Positions 125–135 (CEEDVPLVCPD) are linker 1. The coil 1B stretch occupies residues 136-236 (YQCYFDTIED…HEEEVNVLRG (101 aa)). Residues 237 to 252 (QLGDRLSVELDTAPTT) form a linker 12 region. A coil 2 region spans residues 253-396 (DLNRVLDEMR…NTYQGLLDSE (144 aa)). Positions 397–431 (DSRLPCNPCSATSMSNDTCEPCSAYVICTVENSCP) are tail.

This sequence belongs to the intermediate filament family. In terms of assembly, heterotetramer of two type I and two type II keratins.

In terms of biological role, may play a role in late hair differentiation. The polypeptide is Keratin, type I cytoskeletal 40 (KRT40) (Bos taurus (Bovine)).